We begin with the raw amino-acid sequence, 343 residues long: Heat-inducible transcription repressor HrcA (343 aa).

The protein belongs to the HrcA family.

Negative regulator of class I heat shock genes (grpE-dnaK-dnaJ and groELS operons). Prevents heat-shock induction of these operons. In Leptospira biflexa serovar Patoc (strain Patoc 1 / Ames), this protein is Heat-inducible transcription repressor HrcA.